The primary structure comprises 222 residues: Oligoribonuclease (222 aa).

The tract at residues 19-38 is disordered; that stretch reads PMASSSSTGKQEESVNGSLE. Polar residues predominate over residues 21-35; sequence ASSSSTGKQEESVNG. Residues 46 to 210 form the Exonuclease domain; it reads LVWIDLEMTG…DDIRESIKEL (165 aa). The active site involves H167.

This sequence belongs to the oligoribonuclease family.

In terms of biological role, 3'-to-5' exoribonuclease specific for small oligoribonucleotides. The polypeptide is Oligoribonuclease (Arabidopsis thaliana (Mouse-ear cress)).